A 423-amino-acid chain; its full sequence is UPF0229 protein PSPTO_0546 (423 aa).

The segment at 65-110 (HHGRGGKQTVVHPGNKEFTTGEHIARPQGGAGGKGPGKAGNSGEGM) is disordered. A compositionally biased stretch (gly residues) spans 93 to 107 (GGAGGKGPGKAGNSG).

Belongs to the UPF0229 family.

The protein is UPF0229 protein PSPTO_0546 of Pseudomonas syringae pv. tomato (strain ATCC BAA-871 / DC3000).